We begin with the raw amino-acid sequence, 326 residues long: Putative [LysW]-lysine/[LysW]-ornithine hydrolase (326 aa).

His-66 lines the Zn(2+) pocket. Residue Asp-68 is part of the active site. Asp-90 is a Zn(2+) binding site. The Proton acceptor role is filled by Glu-117. Positions 118, 139, and 297 each coordinate Zn(2+).

The protein belongs to the peptidase M20A family. LysK subfamily. The cofactor is Zn(2+). Co(2+) serves as cofactor.

It is found in the cytoplasm. It catalyses the reaction [amino-group carrier protein]-C-terminal-gamma-(L-lysyl)-L-glutamate + H2O = [amino-group carrier protein]-C-terminal-L-glutamate + L-lysine. It carries out the reaction [amino-group carrier protein]-C-terminal-gamma-(L-ornithyl)-L-glutamate + H2O = [amino-group carrier protein]-C-terminal-L-glutamate + L-ornithine. The protein operates within amino-acid biosynthesis; L-lysine biosynthesis via AAA pathway; L-lysine from L-alpha-aminoadipate (Thermus route): step 5/5. Its pathway is amino-acid biosynthesis; L-arginine biosynthesis. Functionally, catalyzes the release of L-lysine from [LysW]-gamma-L-lysine and the release of L-ornithine from [LysW]-L-ornithine. The sequence is that of Putative [LysW]-lysine/[LysW]-ornithine hydrolase from Pyrococcus furiosus (strain ATCC 43587 / DSM 3638 / JCM 8422 / Vc1).